Here is a 120-residue protein sequence, read N- to C-terminus: Large ribosomal subunit protein uL24 (120 aa).

The tract at residues 1-33 (MTRQPHKQRNRQERAALHEKQKQVRAPLSPELR) is disordered. The segment covering 10–22 (NRQERAALHEKQK) has biased composition (basic and acidic residues).

Belongs to the universal ribosomal protein uL24 family. In terms of assembly, part of the 50S ribosomal subunit.

In terms of biological role, one of two assembly initiator proteins, it binds directly to the 5'-end of the 23S rRNA, where it nucleates assembly of the 50S subunit. Its function is as follows. Located at the polypeptide exit tunnel on the outside of the subunit. In Natronomonas pharaonis (strain ATCC 35678 / DSM 2160 / CIP 103997 / JCM 8858 / NBRC 14720 / NCIMB 2260 / Gabara) (Halobacterium pharaonis), this protein is Large ribosomal subunit protein uL24.